The chain runs to 362 residues: Phosphoserine aminotransferase (362 aa).

Positions 9 and 42 each coordinate L-glutamate. Residues 76–77, Trp102, Thr153, Asp174, and Gln197 contribute to the pyridoxal 5'-phosphate site; that span reads GR. N6-(pyridoxal phosphate)lysine is present on Lys198. Residue 239 to 240 coordinates pyridoxal 5'-phosphate; it reads NT.

This sequence belongs to the class-V pyridoxal-phosphate-dependent aminotransferase family. SerC subfamily. In terms of assembly, homodimer. Pyridoxal 5'-phosphate serves as cofactor.

Its subcellular location is the cytoplasm. It carries out the reaction O-phospho-L-serine + 2-oxoglutarate = 3-phosphooxypyruvate + L-glutamate. The catalysed reaction is 4-(phosphooxy)-L-threonine + 2-oxoglutarate = (R)-3-hydroxy-2-oxo-4-phosphooxybutanoate + L-glutamate. The protein operates within amino-acid biosynthesis; L-serine biosynthesis; L-serine from 3-phospho-D-glycerate: step 2/3. It participates in cofactor biosynthesis; pyridoxine 5'-phosphate biosynthesis; pyridoxine 5'-phosphate from D-erythrose 4-phosphate: step 3/5. Its function is as follows. Catalyzes the reversible conversion of 3-phosphohydroxypyruvate to phosphoserine and of 3-hydroxy-2-oxo-4-phosphonooxybutanoate to phosphohydroxythreonine. This is Phosphoserine aminotransferase from Escherichia coli O17:K52:H18 (strain UMN026 / ExPEC).